The following is a 64-amino-acid chain: Large ribosomal subunit protein bL33 (64 aa).

This sequence belongs to the bacterial ribosomal protein bL33 family.

The protein is Large ribosomal subunit protein bL33 of Nostoc punctiforme (strain ATCC 29133 / PCC 73102).